A 1140-amino-acid polypeptide reads, in one-letter code: Envelopment polyprotein (1140 aa).

The N-terminal stretch at 1 to 17 is a signal peptide; it reads MVGWVCISLVVLATTTA. Topologically, residues 18–489 are lumenal; the sequence is GLTRNLYELK…VPGLHGWATT (472 aa). Cystine bridges form between cysteine 30-cysteine 155, cysteine 64-cysteine 161, cysteine 113-cysteine 132, cysteine 137-cysteine 142, cysteine 179-cysteine 189, and cysteine 214-cysteine 251. The N-linked (GlcNAc...) asparagine; by host glycan is linked to asparagine 138. An N-linked (GlcNAc...) asparagine; by host glycan is attached at asparagine 351. Cystine bridges form between cysteine 380–cysteine 439, cysteine 384–cysteine 393, cysteine 409–cysteine 428, and cysteine 456–cysteine 479. An N-linked (GlcNAc...) asparagine; by host glycan is attached at asparagine 403. The helical transmembrane segment at 490–510 threads the bilayer; the sequence is ALLITFCFGWLLIPTITMIIL. At 511–631 the chain is on the cytoplasmic side; that stretch reads KILRLLTFSC…LGVFRYKSRC (121 aa). Residues 520-537 form a binding to the ribonucleoprotein region; sequence CSHYSTESKFKAILERVK. 2 CCHC-type zinc fingers span residues 549-569 and 574-595; these read CDVCHHECETAKELETHKKSC and CPYCMTMTESTESALQAHFSIC. Binding to the ribonucleoprotein regions lie at residues 592-609, 596-607, and 615-629; these read FSICKLTNRFQENLKKSL, KLTNRFQENLKK, and KQGCYRTLGVFRYKS. Residues 611–638 are interaction with host TRAF3; sequence RPEVKQGCYRTLGVFRYKSRCYVGLVWG. One can recognise an ITAM domain in the interval 615–638; sequence KQGCYRTLGVFRYKSRCYVGLVWG. 2 positions are modified to phosphotyrosine; by host: tyrosine 619 and tyrosine 632. The short motif at 619-622 is the YxxL element; that stretch reads YRTL. Residues 632–652 form a helical membrane-spanning segment; the sequence is YVGLVWGVLLTTELIVWAASA. Residues 653–1108 are Lumenal-facing; sequence DTPLMESGWS…EWLLGILNGN (456 aa). Disulfide bonds link cysteine 739-cysteine 774, cysteine 743-cysteine 781, cysteine 755-cysteine 888, cysteine 769-cysteine 899, cysteine 784-cysteine 907, cysteine 810-cysteine 819, cysteine 827-cysteine 836, and cysteine 867-cysteine 871. Positions 761–781 are fusion loop; the sequence is YQYETSWGCNPPDCPGVGTGC. A glycan (N-linked (GlcNAc...) asparagine; by host) is linked at asparagine 931. Cystine bridges form between cysteine 973/cysteine 1003, cysteine 996/cysteine 1048, cysteine 1013/cysteine 1018, cysteine 1049/cysteine 1054, and cysteine 1088/cysteine 1092. The chain crosses the membrane as a helical span at residues 1109–1129; sequence WVVVAVLIVILILSILLFSFF. A binding to the ribonucleoprotein region spans residues 1125–1140; that stretch reads LFSFFCPIRGRKNKSN. Topologically, residues 1130–1140 are cytoplasmic; that stretch reads CPIRGRKNKSN.

The protein belongs to the hantavirus envelope glycoprotein family. As to quaternary structure, homodimer. Homotetramer; forms heterotetrameric Gn-Gc spikes in the pre-fusion conformation. Interacts (via C-terminus) with the nucleoprotein. Interacts with host TUFM; this interaction contributes to the virus-induced degradation of mitochondria by autophagy, which leads to degradation of host MAVS and inhibition of type I interferon (IFN) responses. Interacts with host MAP1LC3B; this interaction contributes to the virus-induced degradation of mitochondria by autophagy, which leads to degradation of host MAVS and inhibition of type I interferon (IFN) responses. Interacts (via C-terminus) with host TRAF3 (via N-terminus); this interaction inhibits the formation of TRAF3-TBK1 complexes. In terms of assembly, homodimer. Homotetramer; forms heterotetrameric Gn-Gc spikes in the pre-fusion conformation. Homotrimer; forms homotrimer in the post-fusion conformation at acidic pH. Interacts (via C-terminus) with the nucleoprotein. Envelope polyprotein precursor is quickly cleaved in vivo just after synthesis, presumably by host signal peptidase.

It localises to the virion membrane. It is found in the host cell surface. The protein localises to the host Golgi apparatus membrane. The protein resides in the host endoplasmic reticulum membrane. Its subcellular location is the host mitochondrion. In terms of biological role, forms homotetramers with glycoprotein C at the surface of the virion. Attaches the virion to host cell receptors including integrin ITGAV/ITGB3. This attachment induces virion internalization predominantly through clathrin-dependent endocytosis. Mediates the assembly and budding of infectious virus particles through its interaction with the nucleocapsid protein and the viral genome. May dysregulate normal immune and endothelial cell responses through an ITAM motif. Translocates to mitochondria, binds to host TUFM and recruits MAP1LC3B. These interactions induce mitochondrial autophagy and therefore destruction of host MAVS leading to inhibition of type I interferon (IFN) responses. Concomitant breakdown of glycoprotein N is apparently prevented by the nucleoprotein that may inhibit Gn-stimulated autophagosome-lysosome fusion. Interacts with the viral genomic RNA. Inhibits the host RIG-I/TBK1 pathway by disrupting the formation of TBK1-TRAF3 complexes and downstream signaling responses required for IFN-beta transcription. Its function is as follows. Forms homotetramers with glycoprotein N at the surface of the virion. Attaches the virion to host cell receptors including integrin ITGAV/ITGB3. This attachment induces virion internalization predominantly through clathrin-dependent endocytosis. Class II fusion protein that promotes fusion of viral membrane with host endosomal membrane after endocytosis of the virion. The polypeptide is Envelopment polyprotein (GP) (Homo sapiens (Human)).